Consider the following 627-residue polypeptide: Mitochondrial distribution and morphology protein 34 (627 aa).

The SMP-LTD domain occupies 1–195; that stretch reads MAFNFNWSPL…LPAIIHRLSL (195 aa). Disordered regions lie at residues 209–230, 332–470, 486–557, and 586–627; these read SAQV…NPPQ, ASLA…RTSP, LQRQ…SRPS, and RIQD…AYRH. Composition is skewed to low complexity over residues 215 to 225 and 332 to 341; these read PSLDGPGLDPL and ASLASSSHSR. Over residues 360-372 the composition is skewed to basic residues; the sequence is RHSKAHARKRKKR. Basic and acidic residues predominate over residues 373–384; it reads VVDLRRRPKSAD. The segment covering 390–412 has biased composition (low complexity); that stretch reads SGESAYTETSTTTSAVSVFSGST. Positions 436–451 are enriched in basic and acidic residues; that stretch reads TLRDRIAARDDAERNS. The span at 528–557 shows a compositional bias: low complexity; that stretch reads PNASNNYTSSSSPSARDPQQQQPQQLSRPS.

Belongs to the MDM34 family. As to quaternary structure, component of the ER-mitochondria encounter structure (ERMES) or MDM complex, composed of MMM1, MDM10, MDM12 and MDM34.

The protein resides in the mitochondrion outer membrane. In terms of biological role, component of the ERMES/MDM complex, which serves as a molecular tether to connect the endoplasmic reticulum (ER) and mitochondria. Components of this complex are involved in the control of mitochondrial shape and protein biogenesis, and function in nonvesicular lipid trafficking between the ER and mitochondria. MDM34 is required for the interaction of the ER-resident membrane protein MMM1 and the outer mitochondrial membrane-resident beta-barrel protein MDM10. In Blastomyces gilchristii (strain SLH14081) (Blastomyces dermatitidis), this protein is Mitochondrial distribution and morphology protein 34.